A 510-amino-acid chain; its full sequence is P-(S)-hydroxymandelonitrile lyase (510 aa).

The first 34 residues, 1 to 34 (MAVFISSSGSPGRATATTTTTTTLLLAVLAAAAA), serve as a signal peptide directing secretion. Residue 116 to 118 (NGG) coordinates substrate. Cystine bridges form between Cys121–Cys377, Cys277–Cys289, and Cys313–Cys344. Asn172 carries N-linked (GlcNAc...) asparagine glycosylation. 212–213 (ES) provides a ligand contact to substrate. Residue Ser213 is part of the active site. Asn365 carries an N-linked (GlcNAc...) asparagine glycan. Residues Asp414 and His469 contribute to the active site. 465–469 (SGAGH) contributes to the substrate binding site.

It belongs to the peptidase S10 family. As to quaternary structure, heterotetramer of two A and two B chains. The A and B chains are linked by a disulfide bond. In terms of processing, the N-terminus of chain A is blocked. In terms of tissue distribution, primary leaves of seedlings.

The catalysed reaction is (S)-4-hydroxymandelonitrile = 4-hydroxybenzaldehyde + hydrogen cyanide. Involved in cyanogenesis, the release of HCN from injured tissues. Is involved in the catabolism of the cyanogenic glycoside dhurrin. The polypeptide is P-(S)-hydroxymandelonitrile lyase (Sorghum bicolor (Sorghum)).